We begin with the raw amino-acid sequence, 307 residues long: UDP-3-O-acyl-N-acetylglucosamine deacetylase (307 aa).

Residues H78, H241, and D245 each contribute to the Zn(2+) site. The Proton donor role is filled by H268.

The protein belongs to the LpxC family. The cofactor is Zn(2+).

The catalysed reaction is a UDP-3-O-[(3R)-3-hydroxyacyl]-N-acetyl-alpha-D-glucosamine + H2O = a UDP-3-O-[(3R)-3-hydroxyacyl]-alpha-D-glucosamine + acetate. Its pathway is glycolipid biosynthesis; lipid IV(A) biosynthesis; lipid IV(A) from (3R)-3-hydroxytetradecanoyl-[acyl-carrier-protein] and UDP-N-acetyl-alpha-D-glucosamine: step 2/6. Its function is as follows. Catalyzes the hydrolysis of UDP-3-O-myristoyl-N-acetylglucosamine to form UDP-3-O-myristoylglucosamine and acetate, the committed step in lipid A biosynthesis. The sequence is that of UDP-3-O-acyl-N-acetylglucosamine deacetylase from Acidovorax sp. (strain JS42).